The primary structure comprises 527 residues: Zinc finger CCCH-type with G patch domain-containing protein (527 aa).

The interval 97 to 126 is disordered; the sequence is GEVSGSSSDMREREDEREEEDDGEVEGEVD. A compositionally biased stretch (acidic residues) spans 111–125; that stretch reads DEREEEDDGEVEGEV. The segment at 173–200 adopts a C3H1-type zinc-finger fold; that stretch reads QKSMKPCPFFLEDKCRFADNCRFSHGEV. The segment at 268–312 is disordered; it reads LREDDLPSCSDSEDDDNGEGEAAFPRVLTQEEDWAPSRSSSAFGG. Positions 317 to 363 constitute a G-patch domain; that stretch reads TRGIGSKLMLKMGYEYGKGLGKTSEGRVEPVLAVVLPKGKSLDQCAE. Disordered regions lie at residues 369 to 396, 410 to 444, and 505 to 527; these read TQRK…AHNT, LGNG…YKGG, and KAQE…MTEF. A compositionally biased stretch (basic residues) spans 384–393; sequence RNKRTRKARA. Over residues 511 to 527 the composition is skewed to basic and acidic residues; that stretch reads AQRENRKADTHKKMTEF.

It localises to the nucleus. Transcription repressor that specifically binds the 5'-GGAG[GA]A[GA]A-3' consensus sequence. Represses transcription by recruiting the chromatin multiprotein complex NuRD to target promoters. Negatively regulates expression of EGFR, a gene involved in cell proliferation, survival and migration. This Salmo salar (Atlantic salmon) protein is Zinc finger CCCH-type with G patch domain-containing protein (zgpat).